The following is a 421-amino-acid chain: UDP-N-acetylglucosamine 1-carboxyvinyltransferase 1 (421 aa).

Position 22–23 (22–23 (KN)) interacts with phosphoenolpyruvate. Arginine 95 provides a ligand contact to UDP-N-acetyl-alpha-D-glucosamine. Cysteine 119 functions as the Proton donor in the catalytic mechanism. At cysteine 119 the chain carries 2-(S-cysteinyl)pyruvic acid O-phosphothioketal. UDP-N-acetyl-alpha-D-glucosamine is bound by residues 124–128 (RPIEQ), aspartate 308, and valine 330.

This sequence belongs to the EPSP synthase family. MurA subfamily.

It localises to the cytoplasm. The enzyme catalyses phosphoenolpyruvate + UDP-N-acetyl-alpha-D-glucosamine = UDP-N-acetyl-3-O-(1-carboxyvinyl)-alpha-D-glucosamine + phosphate. Its pathway is cell wall biogenesis; peptidoglycan biosynthesis. Cell wall formation. Adds enolpyruvyl to UDP-N-acetylglucosamine. This Staphylococcus aureus (strain MRSA252) protein is UDP-N-acetylglucosamine 1-carboxyvinyltransferase 1.